Reading from the N-terminus, the 142-residue chain is Large ribosomal subunit protein mL43 (142 aa).

Belongs to the mitochondrion-specific ribosomal protein mL43 family. Component of the mitochondrial large ribosomal subunit. Mature mitochondrial ribosomes consist of a small (37S) and a large (54S) subunit. The 37S subunit contains at least 33 different proteins and 1 molecule of RNA (15S). The 54S subunit contains at least 45 different proteins and 1 molecule of RNA (21S).

Its subcellular location is the mitochondrion. This is Large ribosomal subunit protein mL43 (MRPL51) from Eremothecium gossypii (strain ATCC 10895 / CBS 109.51 / FGSC 9923 / NRRL Y-1056) (Yeast).